Here is a 141-residue protein sequence, read N- to C-terminus: Hemoglobin subunit alpha-A (141 aa).

The region spanning 1–141 (VLSASDKTNV…VAKELTAKYR (141 aa)) is the Globin domain. An O2-binding site is contributed by histidine 58. Histidine 87 contacts heme b.

This sequence belongs to the globin family. Heterotetramer of two alpha chains and two beta chains. In terms of tissue distribution, red blood cells.

Involved in oxygen transport from the lung to the various peripheral tissues. This is Hemoglobin subunit alpha-A (HBAA) from Phalacrocorax carbo (Great cormorant).